Consider the following 142-residue polypeptide: MVTIIDGEGLVLGRLASTVSKRLLDGEEITIINAEKIIISGNKDFIYAKYKQRVDRASISNPRDLGPKYPRRPDDIFRRTVRGMIPYRKAHGRAAYKNLKVNVGIPKELEGQEVVEVEQAQPKNITKSMELGTVSKLLGAKF.

This sequence belongs to the universal ribosomal protein uL13 family. As to quaternary structure, part of the 50S ribosomal subunit.

In terms of biological role, this protein is one of the early assembly proteins of the 50S ribosomal subunit, although it is not seen to bind rRNA by itself. It is important during the early stages of 50S assembly. This chain is Large ribosomal subunit protein uL13, found in Methanosphaera stadtmanae (strain ATCC 43021 / DSM 3091 / JCM 11832 / MCB-3).